Consider the following 1597-residue polypeptide: Protein STU1 (1597 aa).

Disordered stretches follow at residues 220–265 (GNSS…PSSS), 519–958 (DKVN…RPIH), 1005–1154 (DAEA…ELNT), and 1307–1332 (SQRPPDKRTSRAFLEAPSPSPDSSLV). The segment covering 535-552 (APRESLKEVMRRSRESSV) has biased composition (basic and acidic residues). Over residues 577-605 (SSGLVGRSLSGSNLTDRSNRLSSTSTSSR) the composition is skewed to low complexity. Composition is skewed to polar residues over residues 610–622 (AVSDSTRPTQMTR) and 632–645 (PSLTRSSRDQSLTR). Composition is skewed to basic and acidic residues over residues 660 to 673 (GSRELPKQRVDQNR) and 694 to 708 (ESSRQSRESSLDPSR). Positions 709–726 (ESSLAPSVHSSTAISRES) are enriched in polar residues. The segment covering 765–781 (EETMNEVTTAEATATTA) has biased composition (low complexity). Composition is skewed to polar residues over residues 791–801 (PRESTPPNSSP) and 808–822 (PATQGVSTSPATGKS). Over residues 832 to 846 (ELSRDLNGESKHLKE) the composition is skewed to basic and acidic residues. Polar residues-rich tracts occupy residues 918-933 (DSQSHGADSADLQSEP), 1013-1025 (TEQTEAVKTSDTA), and 1036-1045 (NSEQGPSTEP). The segment covering 1081-1091 (ASDEIETDHTK) has biased composition (basic and acidic residues). The segment covering 1108 to 1119 (EPMEICDSDNDA) has biased composition (acidic residues). Residues 1122–1139 (NGTNPDTKCQDQQDSTTP) are compositionally biased toward polar residues. The stretch at 1537-1573 (PSYETQLLALITELISDPDPLVRRVTVGLVVRVLRVS) is one HEAT repeat.

The protein belongs to the CLASP family. As to quaternary structure, interacts with microtubules.

The protein resides in the cytoplasm. Its subcellular location is the cytoskeleton. It is found in the nucleus. It localises to the spindle. In terms of biological role, microtubule binding protein that promotes the stabilization of dynamic microtubules. Required for mitotic spindle formation. This Yarrowia lipolytica (strain CLIB 122 / E 150) (Yeast) protein is Protein STU1 (STU1).